The following is a 147-amino-acid chain: Shadow of prion protein (147 aa).

The signal sequence occupies residues 1–24 (MNWTAATCWALLLAAAFLCDSCSA). The span at 26–43 (GGRGGARGSARGVRGGAR) shows a compositional bias: gly residues. The interval 26–45 (GGRGGARGSARGVRGGARGA) is disordered. Asn-107 is a glycosylation site (N-linked (GlcNAc...) asparagine). The GPI-anchor amidated glycine moiety is linked to residue Gly-122. The propeptide at 123–147 (SGSVHSPRICLLLGGTLGALELLRP) is removed in mature form.

The protein belongs to the SPRN family. Post-translationally, N-glycosylated. As to expression, mainly expressed in brain (at protein level). In brain, it is highly expressed in the hippocampus and cerebellum and is also expressed at lower level in other areas of the brain including the cerebral cortex, the thalamus and the medulla. In hippocampus and cerebellum it is highly expressed in the cell bodies of pyramidal cells and Purkinje cells, respectively.

The protein localises to the cell membrane. Its function is as follows. Prion-like protein that has PrP(C)-like neuroprotective activity. May act as a modulator for the biological actions of normal and abnormal PrP. The polypeptide is Shadow of prion protein (Sprn) (Mus musculus (Mouse)).